Here is a 301-residue protein sequence, read N- to C-terminus: uncharacterized protein (301 aa).

Belongs to the asfivirus E301R family. Interacts with host IRF3.

Functionally, plays a role in the inhibition of host innate immune system by acting as a negatively regulator of type I interferon production. Mechanistically, interacts with and prevents host IRF3 nuclear localization to inhibit its transcriptional activity. This is an uncharacterized protein from African swine fever virus (isolate Warthog/Namibia/Wart80/1980) (ASFV).